A 342-amino-acid chain; its full sequence is Renalase (342 aa).

Residues 1-17 form the signal peptide; sequence MAQVLIVGAGMTGSLCA. FAD is bound by residues Thr-12, Arg-42, and 61 to 62; that span reads QY.

The protein belongs to the renalase family. Requires FAD as cofactor. In terms of tissue distribution, secreted into the blood by the kidney. Highly expressed in the kidney, expressed at lower level in heart, skeletal muscle and small intestine. Its plasma concentration is markedly reduced in patients with end-stage renal disease, as compared with healthy subjects.

The protein localises to the secreted. The enzyme catalyses 1,2-dihydro-beta-NAD + O2 + H(+) = H2O2 + NAD(+). It carries out the reaction 1,2-dihydro-beta-NADP + O2 + H(+) = H2O2 + NADP(+). It catalyses the reaction 1,6-dihydro-beta-NADP + O2 + H(+) = H2O2 + NADP(+). The catalysed reaction is 1,6-dihydro-beta-NAD + O2 + H(+) = H2O2 + NAD(+). In terms of biological role, catalyzes the oxidation of the less abundant 1,2-dihydro-beta-NAD(P) and 1,6-dihydro-beta-NAD(P) to form beta-NAD(P)(+). The enzyme hormone is secreted by the kidney, and circulates in blood and modulates cardiac function and systemic blood pressure. Lowers blood pressure in vivo by decreasing cardiac contractility and heart rate and preventing a compensatory increase in peripheral vascular tone, suggesting a causal link to the increased plasma catecholamine and heightened cardiovascular risk. High concentrations of catecholamines activate plasma renalase and promotes its secretion and synthesis. This Homo sapiens (Human) protein is Renalase (RNLS).